Here is a 229-residue protein sequence, read N- to C-terminus: ATP synthase subunit a 1 (229 aa).

A run of 6 helical transmembrane segments spans residues 25–45 (ADAV…SFLA), 86–106 (VATV…PGFF), 111–131 (NINT…VVGI), 142–162 (FCGP…IGHL), 181–201 (LVLI…MMLM), and 202–222 (GVLV…IYIQ).

This sequence belongs to the ATPase A chain family. In terms of assembly, F-type ATPases have 2 components, CF(1) - the catalytic core - and CF(0) - the membrane proton channel. CF(1) has five subunits: alpha(3), beta(3), gamma(1), delta(1), epsilon(1). CF(0) has three main subunits: a(1), b(2) and c(9-12). The alpha and beta chains form an alternating ring which encloses part of the gamma chain. CF(1) is attached to CF(0) by a central stalk formed by the gamma and epsilon chains, while a peripheral stalk is formed by the delta and b chains.

The protein resides in the cell inner membrane. Its function is as follows. Key component of the proton channel; it plays a direct role in the translocation of protons across the membrane. This chain is ATP synthase subunit a 1, found in Pelobacter propionicus (strain DSM 2379 / NBRC 103807 / OttBd1).